The chain runs to 353 residues: tRNA N6-adenosine threonylcarbamoyltransferase (353 aa).

Residues His111 and His115 each contribute to the Fe cation site. Residues 134-138 (LVSGG), Asp167, Gly180, Asp184, and Asn279 contribute to the substrate site. A Fe cation-binding site is contributed by Asp307.

This sequence belongs to the KAE1 / TsaD family. The cofactor is Fe(2+).

Its subcellular location is the cytoplasm. The enzyme catalyses L-threonylcarbamoyladenylate + adenosine(37) in tRNA = N(6)-L-threonylcarbamoyladenosine(37) in tRNA + AMP + H(+). Its function is as follows. Required for the formation of a threonylcarbamoyl group on adenosine at position 37 (t(6)A37) in tRNAs that read codons beginning with adenine. Is involved in the transfer of the threonylcarbamoyl moiety of threonylcarbamoyl-AMP (TC-AMP) to the N6 group of A37, together with TsaE and TsaB. TsaD likely plays a direct catalytic role in this reaction. This is tRNA N6-adenosine threonylcarbamoyltransferase from Thermosynechococcus vestitus (strain NIES-2133 / IAM M-273 / BP-1).